We begin with the raw amino-acid sequence, 39 residues long: Cytochrome b559 subunit beta (39 aa).

Residues Trp-14–Ser-30 traverse the membrane as a helical segment. His-18 contacts heme.

This sequence belongs to the PsbE/PsbF family. As to quaternary structure, heterodimer of an alpha subunit and a beta subunit. PSII is composed of 1 copy each of membrane proteins PsbA, PsbB, PsbC, PsbD, PsbE, PsbF, PsbH, PsbI, PsbJ, PsbK, PsbL, PsbM, PsbT, PsbX, PsbY, PsbZ, Psb30/Ycf12, at least 3 peripheral proteins of the oxygen-evolving complex and a large number of cofactors. It forms dimeric complexes. Heme b is required as a cofactor.

Its subcellular location is the plastid. It localises to the chloroplast thylakoid membrane. Functionally, this b-type cytochrome is tightly associated with the reaction center of photosystem II (PSII). PSII is a light-driven water:plastoquinone oxidoreductase that uses light energy to abstract electrons from H(2)O, generating O(2) and a proton gradient subsequently used for ATP formation. It consists of a core antenna complex that captures photons, and an electron transfer chain that converts photonic excitation into a charge separation. The protein is Cytochrome b559 subunit beta of Lotus japonicus (Lotus corniculatus var. japonicus).